Here is a 174-residue protein sequence, read N- to C-terminus: Protein GrpE (174 aa).

Positions M1 to A35 are disordered. A compositionally biased stretch (acidic residues) spans E9 to T25. Residues T26–A35 show a composition bias toward basic and acidic residues.

Belongs to the GrpE family. Homodimer.

The protein localises to the cytoplasm. Functionally, participates actively in the response to hyperosmotic and heat shock by preventing the aggregation of stress-denatured proteins, in association with DnaK and GrpE. It is the nucleotide exchange factor for DnaK and may function as a thermosensor. Unfolded proteins bind initially to DnaJ; upon interaction with the DnaJ-bound protein, DnaK hydrolyzes its bound ATP, resulting in the formation of a stable complex. GrpE releases ADP from DnaK; ATP binding to DnaK triggers the release of the substrate protein, thus completing the reaction cycle. Several rounds of ATP-dependent interactions between DnaJ, DnaK and GrpE are required for fully efficient folding. This chain is Protein GrpE, found in Streptococcus pneumoniae (strain ATCC BAA-255 / R6).